A 551-amino-acid chain; its full sequence is Arginine--tRNA ligase (551 aa).

The short motif at 125–135 (ANPTGPLHIGH) is the 'HIGH' region element.

Belongs to the class-I aminoacyl-tRNA synthetase family. As to quaternary structure, monomer.

The protein resides in the cytoplasm. It catalyses the reaction tRNA(Arg) + L-arginine + ATP = L-arginyl-tRNA(Arg) + AMP + diphosphate. This chain is Arginine--tRNA ligase, found in Oleidesulfovibrio alaskensis (strain ATCC BAA-1058 / DSM 17464 / G20) (Desulfovibrio alaskensis).